The sequence spans 143 residues: MGKPSGLRCARKLXNRRRDQKWHDXXYKKSHLGTALKANPFGGASHAKGIVLEKIGVEAKQPNSAIRKCVRVQLIKNGKKITAFVPNDGCLNYIEENDEVLVAGFGRSGHAVGDIPGVRFKIVKVANVSLHALFTGKKERPRS.

Proline 62 carries the hydroxyproline modification.

This sequence belongs to the universal ribosomal protein uS12 family. As to quaternary structure, component of the 40S small ribosomal subunit.

Its subcellular location is the cytoplasm. It is found in the cytosol. The protein localises to the rough endoplasmic reticulum. The polypeptide is Small ribosomal subunit protein uS12 (RPS23) (Ciona intestinalis (Transparent sea squirt)).